Here is a 206-residue protein sequence, read N- to C-terminus: Small ribosomal subunit protein uS4 (206 aa).

One can recognise an S4 RNA-binding domain in the interval 96–156 (GRLDNVVYRM…EKAKKQARIK (61 aa)).

It belongs to the universal ribosomal protein uS4 family. In terms of assembly, part of the 30S ribosomal subunit. Contacts protein S5. The interaction surface between S4 and S5 is involved in control of translational fidelity.

Its function is as follows. One of the primary rRNA binding proteins, it binds directly to 16S rRNA where it nucleates assembly of the body of the 30S subunit. Functionally, with S5 and S12 plays an important role in translational accuracy. The sequence is that of Small ribosomal subunit protein uS4 from Tolumonas auensis (strain DSM 9187 / NBRC 110442 / TA 4).